We begin with the raw amino-acid sequence, 74 residues long: Putative Fe(2+) transport protein A (74 aa).

Belongs to the FeoA family.

Its function is as follows. Might be involved in Fe(2+) ion uptake. This is Putative Fe(2+) transport protein A from Campylobacter jejuni subsp. jejuni serotype O:2 (strain ATCC 700819 / NCTC 11168).